The sequence spans 268 residues: Forkhead box protein R1 (268 aa).

A disordered region spans residues 91 to 126 (EDSCSEASEVQQPLPPCRQKRKQRRSTVPLPLAPGR). A DNA-binding region (fork-head) is located at residues 149 to 248 (RPPLHYFHLI…KEARTLASTQ (100 aa)).

Expressed in adult germ cells (at protein level). Expressed in heart, liver, lung and embryonic brain.

Its subcellular location is the nucleus. The protein localises to the cytoplasm. It localises to the perinuclear region. Its function is as follows. Transcription factor which acts as both an activator and a repressor. Activates transcription of a number of genes including the heat shock chaperones HSPA1A and HSPA6 and the antioxidant NADPH-dependent reductase DHRS2 which are involved in protection against oxidative stress. Required for normal brain development. The protein is Forkhead box protein R1 (Foxr1) of Mus musculus (Mouse).